The sequence spans 1128 residues: GTPase-activating protein BEM3 (1128 aa).

The segment at 194–241 (SSPTKIHSEQLASPAASVTYTTSRITIKSPNKGSKSPLQERLRSPQNP) is disordered. Polar residues predominate over residues 209 to 230 (ASVTYTTSRITIKSPNKGSKSP). At Ser254 the chain carries Phosphoserine. 2 disordered regions span residues 345 to 391 (EDLV…TPLS) and 418 to 486 (PVLT…RPHA). Residues 366-375 (LPPPPAPPTF) are compositionally biased toward pro residues. 2 stretches are compositionally biased toward polar residues: residues 382-391 (GNIKNSTPLS) and 420-478 (LTSS…QGSL). In terms of domain architecture, PH spans 634 to 741 (DNVKDGSLLL…WLSAFSDYID (108 aa)). 2 disordered regions span residues 746–777 (LSLS…NATI) and 796–838 (NNNI…DSRR). Over residues 752 to 764 (RNANDTDSASHLS) the composition is skewed to polar residues. Residues 796 to 815 (NNNISNSSNNIANSDGIDSN) are compositionally biased toward low complexity. Positions 816 to 829 (PSSHSNFLASSSGN) are enriched in polar residues. One can recognise a Rho-GAP domain in the interval 913-1128 (LRLSSHKYQN…EKVDIHIPQV (216 aa)).

It localises to the cytoplasm. In terms of biological role, GTPase-activating protein (GAP) for CDC42 and less efficiently for RHO1. Negative regulator of the pheromone-response pathway through the STE20 protein kinase. The chain is GTPase-activating protein BEM3 (BEM3) from Saccharomyces cerevisiae (strain ATCC 204508 / S288c) (Baker's yeast).